The following is a 793-amino-acid chain: Phosphoribosylformylglycinamidine synthase subunit PurL (793 aa).

H53 is a catalytic residue. ATP-binding residues include Y56 and K95. A Mg(2+)-binding site is contributed by E97. Residues 98–101 (SHNH) and R120 contribute to the substrate site. Catalysis depends on H99, which acts as the Proton acceptor. Residue D121 coordinates Mg(2+). Q244 lines the substrate pocket. D272 is a Mg(2+) binding site. 316 to 318 (ESQ) lines the substrate pocket. The ATP site is built by D523 and G560. N561 contacts Mg(2+). Residue S563 participates in substrate binding.

This sequence belongs to the FGAMS family. Monomer. Part of the FGAM synthase complex composed of 1 PurL, 1 PurQ and 2 PurS subunits.

Its subcellular location is the cytoplasm. The enzyme catalyses N(2)-formyl-N(1)-(5-phospho-beta-D-ribosyl)glycinamide + L-glutamine + ATP + H2O = 2-formamido-N(1)-(5-O-phospho-beta-D-ribosyl)acetamidine + L-glutamate + ADP + phosphate + H(+). It participates in purine metabolism; IMP biosynthesis via de novo pathway; 5-amino-1-(5-phospho-D-ribosyl)imidazole from N(2)-formyl-N(1)-(5-phospho-D-ribosyl)glycinamide: step 1/2. In terms of biological role, part of the phosphoribosylformylglycinamidine synthase complex involved in the purines biosynthetic pathway. Catalyzes the ATP-dependent conversion of formylglycinamide ribonucleotide (FGAR) and glutamine to yield formylglycinamidine ribonucleotide (FGAM) and glutamate. The FGAM synthase complex is composed of three subunits. PurQ produces an ammonia molecule by converting glutamine to glutamate. PurL transfers the ammonia molecule to FGAR to form FGAM in an ATP-dependent manner. PurS interacts with PurQ and PurL and is thought to assist in the transfer of the ammonia molecule from PurQ to PurL. This Prochlorococcus marinus (strain SARG / CCMP1375 / SS120) protein is Phosphoribosylformylglycinamidine synthase subunit PurL.